A 127-amino-acid chain; its full sequence is Protein ApaG (127 aa).

Residues 3-127 (NERKYSIKVE…FILSVPRVLH (125 aa)) form the ApaG domain.

In Nitrosomonas europaea (strain ATCC 19718 / CIP 103999 / KCTC 2705 / NBRC 14298), this protein is Protein ApaG.